A 309-amino-acid chain; its full sequence is Taste receptor type 2 member 20 (309 aa).

The Extracellular segment spans residues 1-6 (MMSFLH). Residues 7-27 (IVFSILVVVAFILGNFANGFI) form a helical membrane-spanning segment. Over 28–46 (ALINFIAWVKRQKISSADQ) the chain is Cytoplasmic. A helical transmembrane segment spans residues 47-67 (IIAALAVSRVGLLWVILLHWY). Topologically, residues 68–79 (STVLNPTSSNLK) are extracellular. The helical transmembrane segment at 80 to 100 (VIIFISNAWAVTNHFSIWLAT) threads the bilayer. Residues 101 to 125 (SLSIFYLLKIVNFSRLIFHHLKRKA) are Cytoplasmic-facing. The helical transmembrane segment at 126–146 (KSVVLVIVLGSLFFLVCHLVM) threads the bilayer. The Extracellular segment spans residues 147 to 178 (KNTYINVWTEECEGNVTWKIKLRNAMHLSNLT). A helical transmembrane segment spans residues 179 to 199 (VAMLANLIPFTLTLISFLLLI). Residues 200–229 (YSLCKHLKKMQLHGKGSQDPSTKIHIKALQ) lie on the Cytoplasmic side of the membrane. A helical transmembrane segment spans residues 230-250 (TVTSFLILLAIYFLCLITSFW). Residues 251–259 (NSKMRPKEI) are Extracellular-facing. The helical transmembrane segment at 260 to 280 (VLMLCQAFGIIYPSFHSFILI) threads the bilayer. Residues 281 to 309 (WGNKTLKQTFLSVLWQVTCWAKGQNQSTP) lie on the Cytoplasmic side of the membrane.

The protein belongs to the G-protein coupled receptor T2R family.

The protein resides in the membrane. In terms of biological role, receptor that may play a role in the perception of bitterness and is gustducin-linked. May play a role in sensing the chemical composition of the gastrointestinal content. The activity of this receptor may stimulate alpha gustducin, mediate PLC-beta-2 activation and lead to the gating of TRPM5. This chain is Taste receptor type 2 member 20 (TAS2R20), found in Pan paniscus (Pygmy chimpanzee).